A 327-amino-acid polypeptide reads, in one-letter code: MATAMTVSSKLLGLLMQQLRGTRQLYFNVSLRSLSSSAQEASKRIPEEVSDHNYESIQVTSAQKHVLHVQLNRPEKRNAMNRAFWRELVECFQKISKDSDCRAVVVSGAGKMFTSGIDLMDMASDILQPPGDDVARIAWYLRDLISRYQKTFTVIEKCPKPVIAAIHGGCIGGGVDLISACDIRYCTQDAFFQVKEVDVGLAADVGTLQRLPKVIGNRSLVNELTFTARKMMADEALDSGLVSRVFPDKDVMLNAAFALAADISSKSPVAVQGSKINLIYSRDHSVDESLDYMATWNMSMLQTQDIIKSVQAAMEKKDSKSITFSKL.

The transit peptide at 1–33 directs the protein to the mitochondrion; the sequence is MATAMTVSSKLLGLLMQQLRGTRQLYFNVSLRS. Substrate-binding positions include 115–119 and Gly173; that span reads SGIDL. Lys230 bears the N6-succinyllysine mark. At Ser267 the chain carries Phosphoserine. Lys316 is modified (N6-succinyllysine). A Microbody targeting signal motif is present at residues 325–327; that stretch reads SKL. Lys326 is modified (N6-acetyllysine).

The protein belongs to the enoyl-CoA hydratase/isomerase family. In terms of assembly, homohexamer. As to expression, expressed in heart and liver (at protein level).

It localises to the mitochondrion. Its subcellular location is the peroxisome. It catalyses the reaction (3E,5Z)-octadienoyl-CoA = (2E,4E)-octadienoyl-CoA. The enzyme catalyses (3E,5Z,8Z,11Z,14Z)-eicosapentaenoyl-CoA = (2E,4E,8Z,11Z,14Z)-eicosapentaenoyl-CoA. The protein operates within lipid metabolism; fatty acid beta-oxidation. Isomerization of 3-trans,5-cis-dienoyl-CoA to 2-trans,4-trans-dienoyl-CoA. The protein is Delta(3,5)-Delta(2,4)-dienoyl-CoA isomerase, mitochondrial of Rattus norvegicus (Rat).